We begin with the raw amino-acid sequence, 595 residues long: Epsin-2 (595 aa).

6 residues coordinate a 1,2-diacyl-sn-glycero-3-phospho-(1D-myo-inositol-4,5-bisphosphate): Arg-8, Lys-11, Arg-25, Asn-30, Arg-63, and His-73. Residues 12–144 enclose the ENTH domain; that stretch reads NIVNNYSEAE…KDEERLKVER (133 aa). The segment covering 164 to 183 has biased composition (polar residues); it reads NQITFGRGSSQPNLSTSYSE. Disordered stretches follow at residues 164–254, 267–289, 305–396, and 423–469; these read NQIT…RLRR, SRRDTVKVPKKKEAKACCKPGSH, SGPV…KPSS, and TSKK…PESF. Position 170 is an omega-N-methylarginine (Arg-170). Phosphoserine occurs at positions 173, 192, and 195. 2 stretches are compositionally biased toward polar residues: residues 197-216 and 235-245; these read HGSTSPRVSSELEQARPQTS and EQSSESVQTAR. UIM domains are found at residues 218 to 237 and 255 to 274; these read EEELQLQLALAMSREVAEQS and GDDLRLQMALEESRRDTVKV. Residues 306-337 show a composition bias toward polar residues; the sequence is GPVTQKTEPWSAGASANQTNPWGGTVAPSNIT. 4 tandem repeats follow at residues 313–315, 325–327, 338–340, and 352–354. Residues 313 to 389 form a 6 X 3 AA repeats of [DE]-P-W region; that stretch reads EPWSAGASAN…SNAGKTTDAW (77 aa). Residues 358-367 show a composition bias toward polar residues; sequence TTASTQSVPK. Repeat unit 5 spans residues 370 to 372; it reads DPW. Residues 374–384 are compositionally biased toward polar residues; the sequence is ASQQPASNAGK. Residues 387-389 form repeat 6; it reads DAW. Ser-443 is modified (phosphoserine). Over residues 449-460 the composition is skewed to low complexity; that stretch reads SQSLTSASSKPS. At Thr-465 the chain carries Phosphothreonine. 2 consecutive repeat copies span residues 494–496 and 508–510. Positions 494-593 are 3 X 3 AA repeats of N-P-F; it reads NPFLAPGAAA…AQSTGTTNPF (100 aa). Phosphoserine is present on Ser-526. Repeat 3 spans residues 591 to 593; the sequence is NPF.

Belongs to the epsin family. Binds EPS15, AP-2 and clathrin. Interacts with UBQLN2. Interacts with ITSN1. In terms of processing, ubiquitinated.

It localises to the cytoplasm. Plays a role in the formation of clathrin-coated invaginations and endocytosis. This Mus musculus (Mouse) protein is Epsin-2 (Epn2).